Here is a 247-residue protein sequence, read N- to C-terminus: Auxin-responsive protein IAA13 (247 aa).

The short motif at 14-18 is the EAR-like (transcriptional repression) element; it reads LELGL. Gly residues predominate over residues 25–40; that stretch reads GTAAKIGKSGGGGAWG. Disordered stretches follow at residues 25-44 and 49-119; these read GTAA…ERGR and KDFP…PKDV. Residues 62 to 75 are compositionally biased toward low complexity; sequence SASHAGSSPPRSSS. Positions 87 to 98 are enriched in polar residues; the sequence is RMNSLVNNQATK. The segment covering 106-119 has biased composition (basic and acidic residues); the sequence is AGKKKVKDDEPKDV. The PB1 domain occupies 129–225; the sequence is VGFIKVNMDG…SVKRLRVMKT (97 aa).

Belongs to the Aux/IAA family. Homodimers and heterodimers. Interacts with TPL. Preferentially expressed in stems.

Its subcellular location is the nucleus. Functionally, aux/IAA proteins are short-lived transcriptional factors that function as repressors of early auxin response genes at low auxin concentrations. Repression is thought to result from the interaction with auxin response factors (ARFs), proteins that bind to the auxin-responsive promoter element (AuxRE). Formation of heterodimers with ARF proteins may alter their ability to modulate early auxin response genes expression. This is Auxin-responsive protein IAA13 (IAA13) from Arabidopsis thaliana (Mouse-ear cress).